A 271-amino-acid polypeptide reads, in one-letter code: Tryptophan synthase alpha chain (271 aa).

Catalysis depends on proton acceptor residues Glu56 and Asp67.

It belongs to the TrpA family. In terms of assembly, tetramer of two alpha and two beta chains.

The catalysed reaction is (1S,2R)-1-C-(indol-3-yl)glycerol 3-phosphate + L-serine = D-glyceraldehyde 3-phosphate + L-tryptophan + H2O. It functions in the pathway amino-acid biosynthesis; L-tryptophan biosynthesis; L-tryptophan from chorismate: step 5/5. In terms of biological role, the alpha subunit is responsible for the aldol cleavage of indoleglycerol phosphate to indole and glyceraldehyde 3-phosphate. This Mycolicibacterium paratuberculosis (strain ATCC BAA-968 / K-10) (Mycobacterium paratuberculosis) protein is Tryptophan synthase alpha chain.